A 218-amino-acid chain; its full sequence is Small ribosomal subunit protein uS5 (218 aa).

In terms of domain architecture, S5 DRBM spans 55 to 118; sequence LDHEVIDVSI…RNAKLNIIPV (64 aa).

Belongs to the universal ribosomal protein uS5 family. In terms of assembly, part of the 30S ribosomal subunit. Contacts protein S4.

With S4 and S12 plays an important role in translational accuracy. The chain is Small ribosomal subunit protein uS5 from Aeropyrum pernix (strain ATCC 700893 / DSM 11879 / JCM 9820 / NBRC 100138 / K1).